We begin with the raw amino-acid sequence, 424 residues long: Spore coat protein SP60 (424 aa).

The N-terminal stretch at 1 to 23 is a signal peptide; it reads MKILSLLVVGALCMGGKVYGEVN. 6 Follistatin-like domains span residues 52 to 74, 85 to 109, 117 to 139, 184 to 206, 215 to 234, and 299 to 322; these read DCSTLQCPPRYHCEVNNGNRQCV, KCDNVHCPKGFNCKYDWEKDLALCV, VCRTRCPEGHECKVDEWGKECCV, ICRLRCPPGHECKHDEHGKECCV, DLKCKRGYECKIKHDGSKCC, and RCDDVECPDFHRCVERRGGILSCE. A disordered region spans residues 330–424; it reads RSLDWAENEN…FQDANDEWDY (95 aa). 2 stretches are compositionally biased toward acidic residues: residues 335 to 357 and 365 to 424; these read AENENDDRDYDDRDYDDDEYDGD and YDGD…EWDY.

This Dictyostelium discoideum (Social amoeba) protein is Spore coat protein SP60 (cotC).